Consider the following 323-residue polypeptide: Beta-ketoacyl-[acyl-carrier-protein] synthase III (323 aa).

Catalysis depends on residues cysteine 113 and histidine 250. The interval 251–255 (QANRR) is ACP-binding. Asparagine 280 is an active-site residue.

Belongs to the thiolase-like superfamily. FabH family. In terms of assembly, homodimer.

It is found in the cytoplasm. It catalyses the reaction malonyl-[ACP] + acetyl-CoA + H(+) = 3-oxobutanoyl-[ACP] + CO2 + CoA. The protein operates within lipid metabolism; fatty acid biosynthesis. In terms of biological role, catalyzes the condensation reaction of fatty acid synthesis by the addition to an acyl acceptor of two carbons from malonyl-ACP. Catalyzes the first condensation reaction which initiates fatty acid synthesis and may therefore play a role in governing the total rate of fatty acid production. Possesses both acetoacetyl-ACP synthase and acetyl transacylase activities. Its substrate specificity determines the biosynthesis of branched-chain and/or straight-chain of fatty acids. This chain is Beta-ketoacyl-[acyl-carrier-protein] synthase III, found in Rhizobium johnstonii (strain DSM 114642 / LMG 32736 / 3841) (Rhizobium leguminosarum bv. viciae).